The sequence spans 215 residues: Large ribosomal subunit protein bL25 (215 aa).

The segment at 160–215 is disordered; the sequence is GDLPLPEGSELVTEPEETVMSVVAPETEEEPDTEEDEEGEEDVEEESEEEEEESEE. Residues 185 to 215 are compositionally biased toward acidic residues; the sequence is ETEEEPDTEEDEEGEEDVEEESEEEEEESEE.

It belongs to the bacterial ribosomal protein bL25 family. CTC subfamily. In terms of assembly, part of the 50S ribosomal subunit; part of the 5S rRNA/L5/L18/L25 subcomplex. Contacts the 5S rRNA. Binds to the 5S rRNA independently of L5 and L18.

Functionally, this is one of the proteins that binds to the 5S RNA in the ribosome where it forms part of the central protuberance. This chain is Large ribosomal subunit protein bL25, found in Natranaerobius thermophilus (strain ATCC BAA-1301 / DSM 18059 / JW/NM-WN-LF).